Reading from the N-terminus, the 295-residue chain is Acetyl-coenzyme A carboxylase carboxyl transferase subunit beta (295 aa).

Residues 25-294 form the CoA carboxyltransferase N-terminal domain; it reads VWTKCTSCEQ…PFNAEELSDT (270 aa). 4 residues coordinate Zn(2+): Cys29, Cys32, Cys48, and Cys51. The segment at 29 to 51 adopts a C4-type zinc-finger fold; sequence CTSCEQVLYRDELKRHLEVCPKC.

It belongs to the AccD/PCCB family. In terms of assembly, acetyl-CoA carboxylase is a heterohexamer composed of biotin carboxyl carrier protein (AccB), biotin carboxylase (AccC) and two subunits each of ACCase subunit alpha (AccA) and ACCase subunit beta (AccD). It depends on Zn(2+) as a cofactor.

It localises to the cytoplasm. It catalyses the reaction N(6)-carboxybiotinyl-L-lysyl-[protein] + acetyl-CoA = N(6)-biotinyl-L-lysyl-[protein] + malonyl-CoA. The protein operates within lipid metabolism; malonyl-CoA biosynthesis; malonyl-CoA from acetyl-CoA: step 1/1. In terms of biological role, component of the acetyl coenzyme A carboxylase (ACC) complex. Biotin carboxylase (BC) catalyzes the carboxylation of biotin on its carrier protein (BCCP) and then the CO(2) group is transferred by the transcarboxylase to acetyl-CoA to form malonyl-CoA. In Mannheimia succiniciproducens (strain KCTC 0769BP / MBEL55E), this protein is Acetyl-coenzyme A carboxylase carboxyl transferase subunit beta.